We begin with the raw amino-acid sequence, 504 residues long: Apolipoprotein N-acyltransferase (504 aa).

6 helical membrane passes run 6-26 (LALT…YALV), 47-67 (ALYG…WVFV), 83-103 (LTAL…WLGV), 105-125 (AGGG…WVVT), 153-173 (IAPV…AGLL), and 186-206 (FALL…KVQW). One can recognise a CN hydrolase domain in the interval 219 to 457 (LQGNVPQDQK…REALTGMMQP (239 aa)). The Proton acceptor role is filled by glutamate 258. Lysine 317 is an active-site residue. Cysteine 369 (nucleophile) is an active-site residue. The helical transmembrane segment at 465-485 (ALWGDWPAIGLCAGIVGICFA) threads the bilayer.

Belongs to the CN hydrolase family. Apolipoprotein N-acyltransferase subfamily.

It localises to the cell inner membrane. It carries out the reaction N-terminal S-1,2-diacyl-sn-glyceryl-L-cysteinyl-[lipoprotein] + a glycerophospholipid = N-acyl-S-1,2-diacyl-sn-glyceryl-L-cysteinyl-[lipoprotein] + a 2-acyl-sn-glycero-3-phospholipid + H(+). It functions in the pathway protein modification; lipoprotein biosynthesis (N-acyl transfer). In terms of biological role, catalyzes the phospholipid dependent N-acylation of the N-terminal cysteine of apolipoprotein, the last step in lipoprotein maturation. This is Apolipoprotein N-acyltransferase from Methylococcus capsulatus (strain ATCC 33009 / NCIMB 11132 / Bath).